The chain runs to 78 residues: Acyl carrier protein (78 aa).

The 76-residue stretch at 2 to 77 (DDLFKKIQQL…DAYEFIKSQQ (76 aa)) folds into the Carrier domain. Ser37 carries the O-(pantetheine 4'-phosphoryl)serine modification.

This sequence belongs to the acyl carrier protein (ACP) family. In terms of processing, 4'-phosphopantetheine is transferred from CoA to a specific serine of apo-ACP by AcpS. This modification is essential for activity because fatty acids are bound in thioester linkage to the sulfhydryl of the prosthetic group.

The protein localises to the cytoplasm. It functions in the pathway lipid metabolism; fatty acid biosynthesis. Carrier of the growing fatty acid chain in fatty acid biosynthesis. The protein is Acyl carrier protein of Treponema denticola (strain ATCC 35405 / DSM 14222 / CIP 103919 / JCM 8153 / KCTC 15104).